We begin with the raw amino-acid sequence, 653 residues long: Asparagine--tRNA ligase, cytoplasmic (653 aa).

The protein belongs to the class-II aminoacyl-tRNA synthetase family.

The protein localises to the cytoplasm. The enzyme catalyses tRNA(Asn) + L-asparagine + ATP = L-asparaginyl-tRNA(Asn) + AMP + diphosphate + H(+). This Dictyostelium discoideum (Social amoeba) protein is Asparagine--tRNA ligase, cytoplasmic (asnS1).